Here is a 324-residue protein sequence, read N- to C-terminus: tRNA uridine(34) hydroxylase (324 aa).

A Rhodanese domain is found at 127 to 221 (QQEETIVIDA…YGKDPEVQGE (95 aa)). The active-site Cysteine persulfide intermediate is the Cys181.

Belongs to the TrhO family.

The enzyme catalyses uridine(34) in tRNA + AH2 + O2 = 5-hydroxyuridine(34) in tRNA + A + H2O. Functionally, catalyzes oxygen-dependent 5-hydroxyuridine (ho5U) modification at position 34 in tRNAs. The sequence is that of tRNA uridine(34) hydroxylase from Bacillus cytotoxicus (strain DSM 22905 / CIP 110041 / 391-98 / NVH 391-98).